Here is a 312-residue protein sequence, read N- to C-terminus: Signal peptidase I (312 aa).

A helical membrane pass occupies residues 7–27 (IFLLTSTFFTGILWIIDHILL). The Cytoplasmic segment spans residues 28–63 (IKNYFYNKKKTKNNNTILINKVILENKKCFFRSLSS). The chain crosses the membrane as a helical span at residues 64-84 (LFPTFFIVFIIRSFIYEPFQI). Residues 85 to 312 (PSGSMMPTLL…IRIKRIGNIY (228 aa)) are Extracellular-facing. Residues S88 and K142 contribute to the active site.

Belongs to the peptidase S26 family.

The protein resides in the cell membrane. It carries out the reaction Cleavage of hydrophobic, N-terminal signal or leader sequences from secreted and periplasmic proteins.. The polypeptide is Signal peptidase I (lepB) (Buchnera aphidicola subsp. Schizaphis graminum (strain Sg)).